The chain runs to 677 residues: MDFPGHFEQIFQQLNYQRLHGQLCDCVIVVGNRHFKAHRSVLAACSTHFRALFSVAEGDQTMNMIQLDSEVVTAEAFAALIDMMYTSTLMLGESNVMDVLLAASHLHLNSVVKACKHYLTTRTLPMSPPSERVQEQSARMQRSFMLQQLGLSIVSSALNSSQNGEEQPAPMSSSMRSNLDQRTPFPMRRLHKRKQSAEERARQRLRPSIDESAISDVTPENGPSGVHSREEFFSPDSLKIVDNPKADGMTDNQEDSAIMFDQSFGTQEDAQVPSQSDNSAGNMAQLSMASRATQVETSFDQEAAPEKSSFQCENPEVGLGEKEHMRVVVKSEPLSSPEPQDEVSDVTSQAEGSESVEVEGVVVSAEKIDLSPESSDRSFSDPQSSTDRVGDIHILEVTNNLEHKSTFSISNFLNKSRGNNFTANQNNDDNIPNTTSDCRLESEAPYLLSPEAGPAGGPSSAPGSHVENPFSEPADSHFVRPMQEVMGLPCVQTSGYQGGEQFGMDFSRSGLGLHSSFSRVMIGSPRGGASNFPYYRRIAPKMPVVTSVRSSQIPENSTSSQLMMNGATSSFENGHPSQPGPPQLTRASADVLSKCKKALSEHNVLVVEGARKYACKICCKTFLTLTDCKKHIRVHTGEKPYACLKCGKRFSQSSHLYKHSKTTCLRWQSSNLPSTLL.

Positions 24–93 (CDCVIVVGNR…MYTSTLMLGE (70 aa)) constitute a BTB domain. The span at 158–181 (LNSSQNGEEQPAPMSSSMRSNLDQ) shows a compositional bias: polar residues. Disordered stretches follow at residues 158-252 (LNSS…MTDN) and 287-312 (SMAS…SFQC). Phosphoserine is present on Ser-234. A Glycyl lysine isopeptide (Lys-Gly) (interchain with G-Cter in SUMO2) cross-link involves residue Lys-239. A compositionally biased stretch (polar residues) spans 287–300 (SMASRATQVETSFD). Glycyl lysine isopeptide (Lys-Gly) (interchain with G-Cter in SUMO2) cross-links involve residues Lys-322 and Lys-330. The interval 331-387 (SEPLSSPEPQDEVSDVTSQAEGSESVEVEGVVVSAEKIDLSPESSDRSFSDPQSSTD) is disordered. A compositionally biased stretch (low complexity) spans 350–365 (AEGSESVEVEGVVVSA). Basic and acidic residues predominate over residues 366-379 (EKIDLSPESSDRSF). The residue at position 371 (Ser-371) is a Phosphoserine. Glycyl lysine isopeptide (Lys-Gly) (interchain with G-Cter in SUMO2) cross-links involve residues Lys-404 and Lys-415. The interval 447 to 474 (LLSPEAGPAGGPSSAPGSHVENPFSEPA) is disordered. The span at 449–464 (SPEAGPAGGPSSAPGS) shows a compositional bias: low complexity. A Glycyl lysine isopeptide (Lys-Gly) (interchain with G-Cter in SUMO2) cross-link involves residue Lys-541. Polar residues predominate over residues 552 to 576 (QIPENSTSSQLMMNGATSSFENGHP). The interval 552 to 585 (QIPENSTSSQLMMNGATSSFENGHPSQPGPPQLT) is disordered. Residues Lys-594 and Lys-597 each participate in a glycyl lysine isopeptide (Lys-Gly) (interchain with G-Cter in SUMO2) cross-link. Residues 613-635 (YACKICCKTFLTLTDCKKHIRVH) form a C2H2-type 1 zinc finger. The C2H2-type 2; atypical zinc finger occupies 641–664 (YACLKCGKRFSQSSHLYKHSKTTC). Glycyl lysine isopeptide (Lys-Gly) (interchain with G-Cter in SUMO2) cross-links involve residues Lys-645 and Lys-658.

The protein localises to the nucleus. May be involved in transcriptional regulation. The polypeptide is Zinc finger and BTB domain-containing protein 5 (ZBTB5) (Homo sapiens (Human)).